A 303-amino-acid chain; its full sequence is Lipoyl synthase (303 aa).

[4Fe-4S] cluster-binding residues include Cys-34, Cys-39, Cys-45, Cys-60, Cys-64, Cys-67, and Ser-273. Residues 46 to 262 (WSKKHATVMI…ERVARTKGFL (217 aa)) enclose the Radical SAM core domain.

Belongs to the radical SAM superfamily. Lipoyl synthase family. [4Fe-4S] cluster is required as a cofactor.

It is found in the cytoplasm. It carries out the reaction [[Fe-S] cluster scaffold protein carrying a second [4Fe-4S](2+) cluster] + N(6)-octanoyl-L-lysyl-[protein] + 2 oxidized [2Fe-2S]-[ferredoxin] + 2 S-adenosyl-L-methionine + 4 H(+) = [[Fe-S] cluster scaffold protein] + N(6)-[(R)-dihydrolipoyl]-L-lysyl-[protein] + 4 Fe(3+) + 2 hydrogen sulfide + 2 5'-deoxyadenosine + 2 L-methionine + 2 reduced [2Fe-2S]-[ferredoxin]. It participates in protein modification; protein lipoylation via endogenous pathway; protein N(6)-(lipoyl)lysine from octanoyl-[acyl-carrier-protein]: step 2/2. Catalyzes the radical-mediated insertion of two sulfur atoms into the C-6 and C-8 positions of the octanoyl moiety bound to the lipoyl domains of lipoate-dependent enzymes, thereby converting the octanoylated domains into lipoylated derivatives. This chain is Lipoyl synthase, found in Rickettsia bellii (strain OSU 85-389).